The chain runs to 518 residues: Cyclin-L2 (518 aa).

Cyclin-like regions lie at residues 81–183 (ELIQ…RVLK) and 196–280 (KIIV…KILQ). The interval 310–518 (AKGLLPGTAP…DHPGHSRHRR (209 aa)) is disordered. Serine 328, serine 335, serine 345, serine 348, and serine 366 each carry phosphoserine. The RS stretch occupies residues 382–420 (RSREQSYSRSPSRSASPKRRKSDSGSTSGGSKSQSRSRS). The segment covering 405 to 427 (SGSTSGGSKSQSRSRSRSDSPPR) has biased composition (low complexity). Over residues 438–450 (SEVRGSRKSKDCK) the composition is skewed to basic and acidic residues. Residues 455 to 469 (KPHKSRSRSSSRSRS) show a composition bias toward basic residues. Composition is skewed to basic and acidic residues over residues 470 to 479 (RSRERTDNSG) and 487 to 512 (YYRD…DHPG).

Belongs to the cyclin family. Cyclin L subfamily. In terms of assembly, interacts with CDK11A, CDK11B, CDK12, CDK13 and POLR2A, the hyperphosphorylated C-terminal domain (CTD) of RNA polymerase II. May form a ternary complex with CDK11B and casein kinase II (CKII). Interacts with pre-mRNA-splicing factors, including at least SRSF1, SRSF2 and SRSF7/SLU7. As to expression, widely expressed (at protein level).

The protein localises to the nucleus speckle. It localises to the nucleus. It is found in the nucleoplasm. Functionally, involved in pre-mRNA splicing. May induce cell death, possibly by acting on the transcription and RNA processing of apoptosis-related factors. The sequence is that of Cyclin-L2 (Ccnl2) from Mus musculus (Mouse).